A 618-amino-acid polypeptide reads, in one-letter code: Structural protein ORF618 (618 aa).

Residues 570 to 598 (ILEAKRQIEDRAKGLSKNLDNTVTEIMNA) are a coiled coil.

Its subcellular location is the virion. The polypeptide is Structural protein ORF618 (Acidianus two-tailed virus (ATV)).